The following is a 142-amino-acid chain: Transcriptional regulator MraZ (142 aa).

SpoVT-AbrB domains are found at residues 5-47 and 76-119; these read EFQH…PQHE and ATEC…SKEE.

The protein belongs to the MraZ family. In terms of assembly, forms oligomers.

The protein resides in the cytoplasm. The protein localises to the nucleoid. The protein is Transcriptional regulator MraZ of Desulforamulus reducens (strain ATCC BAA-1160 / DSM 100696 / MI-1) (Desulfotomaculum reducens).